Reading from the N-terminus, the 374-residue chain is Large ribosomal subunit protein uL4 (374 aa).

The tract at residues 336–355 is disordered; that stretch reads EKAMAKGMQNKKNREARHAA.

Belongs to the universal ribosomal protein uL4 family.

The chain is Large ribosomal subunit protein uL4 (RPL4) from Trypanosoma brucei brucei.